A 32-amino-acid chain; its full sequence is Cathepsin B-like cysteine proteinase (32 aa).

Positions 1-22 (KPNYKRQFEPFSDELIHYINLE) are cleaved as a propeptide — activation peptide.

It belongs to the peptidase C1 family.

In terms of biological role, thiol protease. This Fasciola hepatica (Liver fluke) protein is Cathepsin B-like cysteine proteinase.